The chain runs to 177 residues: ATP synthase subunit b (177 aa).

Residues 19–39 (LFPNLPNFIAHVIATIVLVVI) traverse the membrane as a helical segment.

This sequence belongs to the ATPase B chain family. As to quaternary structure, F-type ATPases have 2 components, F(1) - the catalytic core - and F(0) - the membrane proton channel. F(1) has five subunits: alpha(3), beta(3), gamma(1), delta(1), epsilon(1). F(0) has three main subunits: a(1), b(2) and c(10-14). The alpha and beta chains form an alternating ring which encloses part of the gamma chain. F(1) is attached to F(0) by a central stalk formed by the gamma and epsilon chains, while a peripheral stalk is formed by the delta and b chains.

The protein localises to the cell membrane. Functionally, f(1)F(0) ATP synthase produces ATP from ADP in the presence of a proton or sodium gradient. F-type ATPases consist of two structural domains, F(1) containing the extramembraneous catalytic core and F(0) containing the membrane proton channel, linked together by a central stalk and a peripheral stalk. During catalysis, ATP synthesis in the catalytic domain of F(1) is coupled via a rotary mechanism of the central stalk subunits to proton translocation. Component of the F(0) channel, it forms part of the peripheral stalk, linking F(1) to F(0). The polypeptide is ATP synthase subunit b (Mesoplasma florum (strain ATCC 33453 / NBRC 100688 / NCTC 11704 / L1) (Acholeplasma florum)).